The following is a 632-amino-acid chain: Extracellular metalloproteinase 1 (632 aa).

Residues 1-19 (MHGLLLAAGLISLPLHVLA) form the signal peptide. Residues 20–246 (HPQPSSTSLA…VVDYVAHATF (227 aa)) constitute a propeptide that is removed on maturation. The N-linked (GlcNAc...) asparagine glycan is linked to asparagine 284. Residue threonine 430 participates in Zn(2+) binding. Residue histidine 431 is part of the active site. Serine 434 provides a ligand contact to Zn(2+). A glycan (N-linked (GlcNAc...) asparagine) is linked at asparagine 591.

This sequence belongs to the peptidase M36 family. Zn(2+) serves as cofactor.

The protein resides in the secreted. PMSF, soybean trypsin inhibitor (SBTI) and chymostatin strongly inhibit the proteinase. Its function is as follows. Secreted metalloproteinase probably acting as a virulence factor. The polypeptide is Extracellular metalloproteinase 1 (MEP1) (Arthroderma otae (Microsporum canis)).